Consider the following 729-residue polypeptide: Ran-binding protein 9 (729 aa).

A compositionally biased stretch (pro residues) spans 1–11; it reads MSGQPPPPPPQ. The interval 1–137 is disordered; sequence MSGQPPPPPP…SAAAPFPHGD (137 aa). The span at 27-49 shows a compositional bias: low complexity; sequence LAPVSGVVLPAPPAVSAGSSPAG. The segment covering 50-60 has biased composition (gly residues); the sequence is SPGGGAGGEGL. Residues 70–93 are compositionally biased toward pro residues; that stretch reads HPPPPPPPATAAPPPPPPPPPPPA. Over residues 107 to 126 the composition is skewed to low complexity; the sequence is GLAAGPGPAGGAPTPALVAG. Residues 147–334 enclose the B30.2/SPRY domain; it reads LQRRLKRLYP…VDANFGQHPF (188 aa). The LisH domain occupies 365–397; sequence WQTMIQKMVSSYLVHHGYCATAEAFARSTDQTV. The interval 401–407 is interaction with CALB1; sequence LASIKNR. One can recognise a CTLH domain in the interval 403–460; the sequence is SIKNRQRIQKLVLAGRMGEAIETTQQLYPSLLERNPNLLFTLKVRQFIEMVNGTDSEV. At lysine 405 the chain carries N6-acetyllysine. The interval 461–489 is disordered; that stretch reads RCLGGRSPKSQDSYPVSPRPFSSPSMSPS. Positions 473–489 are enriched in low complexity; it reads SYPVSPRPFSSPSMSPS. Phosphoserine is present on residues serine 477 and serine 487. Residues 615-729 are interaction with FMR1; it reads AAIERMIHFG…AFATVEDYLH (115 aa).

The protein belongs to the RANBP9/10 family. Part of a complex consisting of RANBP9, MKLN1 and GID8. Identified in the CTLH complex that contains GID4, RANBP9 and/or RANBP10, MKLN1, MAEA, RMND5A (or alternatively its paralog RMND5B), GID8, ARMC8, WDR26 and YPEL5. Within this complex, MAEA, RMND5A (or alternatively its paralog RMND5B), GID8, WDR26, and RANBP9 and/or RANBP10 form the catalytic core, while GID4, MKLN1, ARMC8 and YPEL5 have ancillary roles. Interacts with GTP-bound Ran, AR, CDC2L1/p110C, CALB1, S100A7, USP11, MKLN1, SOS1 or SOS2, GID8, and FMR1. Interacts with the Dyrk kinases HIPK2, DYRK1A, and DYRK1B. Interacts with TP73 isoform Alpha but not with TP53. Interacts with the HGF receptor MET and the integrins ITGB1 and ITGB2, but not with ITGAL. Part of a complex consisting of RANBP9, RAN, DYRK1B and COPS5. Directly interacts with RANBP10. Interacts with YPEL5. Interacts with DDX4. Interacts with NGFR. Interacts with TEX19. Phosphorylated in response to stress. Can be phosphorylated by the cleaved p110 form of CDC2L1 (p110C). Post-translationally, ubiquitinated. Polyubiquitination targets the protein for rapid degradation via the ubiquitin system. Can be deubiquitinated by USP11. In terms of tissue distribution, ubiquitously expressed, with highest levels in testes, placenta, heart, and muscle, and lowest levels in lung. Within the brain, expressed predominantly by neurons in the gray matter of cortex, the granular layer of cerebellum and the Purkinje cells.

It is found in the cytoplasm. It localises to the nucleus. The protein resides in the cell membrane. Its function is as follows. May act as scaffolding protein, and as adapter protein to couple membrane receptors to intracellular signaling pathways. Acts as a mediator of cell spreading and actin cytoskeleton rearrangement. Core component of the CTLH E3 ubiquitin-protein ligase complex that selectively accepts ubiquitin from UBE2H and mediates ubiquitination and subsequent proteasomal degradation of the transcription factor HBP1. May be involved in signaling of ITGB2/LFA-1 and other integrins. Enhances HGF-MET signaling by recruiting Sos and activating the Ras pathway. Enhances dihydrotestosterone-induced transactivation activity of AR, as well as dexamethasone-induced transactivation activity of NR3C1, but not affect estrogen-induced transactivation. Stabilizes TP73 isoform Alpha, probably by inhibiting its ubiquitination, and increases its proapoptotic activity. Inhibits the kinase activity of DYRK1A and DYRK1B. Inhibits FMR1 binding to RNA. This Homo sapiens (Human) protein is Ran-binding protein 9 (RANBP9).